We begin with the raw amino-acid sequence, 147 residues long: Ribosome-binding factor A (147 aa).

Residues 122–147 (QQQFGSVDDDVIENDIEESDDTEGKV) are disordered. Over residues 128-147 (VDDDVIENDIEESDDTEGKV) the composition is skewed to acidic residues.

It belongs to the RbfA family. As to quaternary structure, monomer. Binds 30S ribosomal subunits, but not 50S ribosomal subunits or 70S ribosomes.

It is found in the cytoplasm. One of several proteins that assist in the late maturation steps of the functional core of the 30S ribosomal subunit. Associates with free 30S ribosomal subunits (but not with 30S subunits that are part of 70S ribosomes or polysomes). Required for efficient processing of 16S rRNA. May interact with the 5'-terminal helix region of 16S rRNA. In Shewanella oneidensis (strain ATCC 700550 / JCM 31522 / CIP 106686 / LMG 19005 / NCIMB 14063 / MR-1), this protein is Ribosome-binding factor A.